The following is a 219-amino-acid chain: Thymidylate kinase (219 aa).

10–17 (GLEGAGKT) serves as a coordination point for ATP.

Belongs to the thymidylate kinase family.

It carries out the reaction dTMP + ATP = dTDP + ADP. In terms of biological role, phosphorylation of dTMP to form dTDP in both de novo and salvage pathways of dTTP synthesis. This Pectobacterium carotovorum subsp. carotovorum (strain PC1) protein is Thymidylate kinase.